The primary structure comprises 1141 residues: Serine-aspartate repeat-containing protein E (1141 aa).

The signal sequence occupies residues 1–52 (MINRDNKKAITKKGMISNRLNKFSIRKYTVGTASILVGTTLIFGLGNQEAKA). The YSIRK-G/S signaling motif signature appears at 23-34 (FSIRKYTVGTAS). The interval 53–601 (AENTSTENAK…GDGTVKPEEK (549 aa)) is ligand binding A region. The segment at 54 to 225 (ENTSTENAKQ…SKEELKNNPE (172 aa)) is disordered. Positions 61–75 (AKQDDATTSDNKEVV) are enriched in basic and acidic residues. Low complexity predominate over residues 77–90 (EAENNSTTENDSTN). Residues 92 to 109 (IKKETNTDSQPEAKEEST) are compositionally biased toward basic and acidic residues. The segment covering 110 to 126 (KSSTQQQQNNVTATTET) has biased composition (low complexity). The segment covering 130–145 (NIEKENVKPSTDKTAT) has biased composition (basic and acidic residues). Residues 158–207 (PNNTNNDVTTKPSTSEIQTKPTTPQESTNIENSQPQPTPSKVDNQVTDAT) are compositionally biased toward polar residues. Over residues 216–225 (SKEELKNNPE) the composition is skewed to basic and acidic residues. CNA-B domains are found at residues 602–714 (LYKI…YKEP), 715–824 (KYNL…YKTP), and 825–935 (KYSL…EEDT). Residues 899-1117 (VTNTTEDDKD…GSENNGSNNA (219 aa)) are disordered. Acidic residues-rich tracts occupy residues 903 to 913 (TEDDKDADGGE) and 930 to 1080 (YFEE…DSDS). The LPXTG sorting signal signature appears at 1104–1108 (LPETG). Position 1107 is a pentaglycyl murein peptidoglycan amidated threonine (threonine 1107). Residues 1108-1141 (GSENNGSNNATLFGGLFAALGSLLLFGRRKKQNK) constitute a propeptide, removed by sortase.

It belongs to the serine-aspartate repeat-containing protein (SDr) family. Interacts with host complement factor H/CFAH (via C-terminus). Interacts with host complement regulator C4BPA.

The protein localises to the secreted. Its subcellular location is the cell wall. Its function is as follows. Cell surface-associated calcium-binding protein which plays an important role in adhesion and pathogenesis. Contributes to the resistance to killing by innate immune components in blood and thus attenuates bacterial clearance by interacting with host complement factor H/CFAH and modulating its activity. Also inhibits bacterial opsonization and killing by interacting with host complement regulator C4BPA and thus inhibiting classical complement pathway activation. The protein is Serine-aspartate repeat-containing protein E (sdrE) of Staphylococcus aureus (strain MSSA476).